Reading from the N-terminus, the 287-residue chain is Glutamate racemase (287 aa).

Over residues 1-15 (MATKPQDANTTSREA) the composition is skewed to polar residues. A disordered region spans residues 1–25 (MATKPQDANTTSREAITSKADSPPR). Substrate-binding positions include 32-33 (DS) and 64-65 (YG). The Proton donor/acceptor role is filled by C96. Position 97-98 (97-98 (NT)) interacts with substrate. The active-site Proton donor/acceptor is the C208. 209 to 210 (TH) contacts substrate.

The protein belongs to the aspartate/glutamate racemases family.

It catalyses the reaction L-glutamate = D-glutamate. It functions in the pathway cell wall biogenesis; peptidoglycan biosynthesis. Its function is as follows. Provides the (R)-glutamate required for cell wall biosynthesis. In Yersinia pseudotuberculosis serotype O:3 (strain YPIII), this protein is Glutamate racemase.